A 257-amino-acid polypeptide reads, in one-letter code: Protein LigF (257 aa).

In terms of domain architecture, GST N-terminal spans 1–82 (MTLKLYSFGP…YLEDVFPESG (82 aa)). In terms of domain architecture, GST C-terminal spans 89–257 (DPFKRAEMRV…LLKRQNEKVA (169 aa)).

Belongs to the GST superfamily.

Lignin degradation enzyme. The protein is Protein LigF (ligF) of Sphingobium sp. (strain NBRC 103272 / SYK-6).